The following is a 476-amino-acid chain: MFQYSAEFKQAKVLVLGDVMLDRYWFGATNRISPEAPVPVVRVQDNEERAGGAANVAMNIAALNVPVKLLGLTGRDETGLALESLLAKSRIECDFVQLHTHPTITKLRILSRHQQLLRLDFEEDFQNVTSDALLQKLDSALQNYGALVLSDYGKGTLNQVQKMIQLARQANIPVLIDPKGTDFERYRGATLLTPNMSEFEAVVGKCDSEEEIIEKGLKLIEQIDLSALLVTRSEKGMTLLRPNQPAFHLATEAKEVFDVTGAGDTVISVLATGLADGRSFEEACYLANVAAGIVVGKLGTSTVSTVELENAIHGRSNTGFGIMSEAELKRVVAQAKARGEKIVMTNGCFDILHPGHVSYLENARKLGDRLIVAVNSDDSVKRLKGETRPINDLQSRMAVLAGLSSVDWLVAFHEDTPQRLIAEVLPDLLVKGGDYKPEDIAGSQEVWASGGDVKVLNFENGCSTSNVISKIQQLKD.

The segment at 1–318 (MFQYSAEFKQ…ENAIHGRSNT (318 aa)) is ribokinase. 195–198 (NMSE) contributes to the ATP binding site. The active site involves aspartate 264. The tract at residues 344–476 (MTNGCFDILH…VISKIQQLKD (133 aa)) is cytidylyltransferase.

The protein in the N-terminal section; belongs to the carbohydrate kinase PfkB family. In the C-terminal section; belongs to the cytidylyltransferase family. As to quaternary structure, homodimer.

It carries out the reaction D-glycero-beta-D-manno-heptose 7-phosphate + ATP = D-glycero-beta-D-manno-heptose 1,7-bisphosphate + ADP + H(+). The catalysed reaction is D-glycero-beta-D-manno-heptose 1-phosphate + ATP + H(+) = ADP-D-glycero-beta-D-manno-heptose + diphosphate. It participates in nucleotide-sugar biosynthesis; ADP-L-glycero-beta-D-manno-heptose biosynthesis; ADP-L-glycero-beta-D-manno-heptose from D-glycero-beta-D-manno-heptose 7-phosphate: step 1/4. The protein operates within nucleotide-sugar biosynthesis; ADP-L-glycero-beta-D-manno-heptose biosynthesis; ADP-L-glycero-beta-D-manno-heptose from D-glycero-beta-D-manno-heptose 7-phosphate: step 3/4. Its pathway is bacterial outer membrane biogenesis; LPS core biosynthesis. Functionally, catalyzes the phosphorylation of D-glycero-D-manno-heptose 7-phosphate at the C-1 position to selectively form D-glycero-beta-D-manno-heptose-1,7-bisphosphate. In terms of biological role, catalyzes the ADP transfer from ATP to D-glycero-beta-D-manno-heptose 1-phosphate, yielding ADP-D-glycero-beta-D-manno-heptose. The polypeptide is Bifunctional protein HldE (Pasteurella multocida (strain Pm70)).